Consider the following 723-residue polypeptide: Envelope glycoprotein H (723 aa).

The N-terminal stretch at 1 to 23 (MSPATRFTVISCLVVSLITPSET) is a signal peptide. The Virion surface portion of the chain corresponds to 24 to 700 (SSWFDPFIEW…IIDIRQTSIF (677 aa)). Residues asparagine 39, asparagine 45, asparagine 144, and asparagine 174 are each glycosylated (N-linked (GlcNAc...) asparagine; by host). Residues 197–263 (HQFAIVLTFT…QSYRDDLLIV (67 aa)) are interaction with gL. Residues asparagine 270, asparagine 340, asparagine 411, asparagine 543, asparagine 621, and asparagine 681 are each glycosylated (N-linked (GlcNAc...) asparagine; by host). The helical transmembrane segment at 701-721 (MIMLYCSLGVLLLYGLYRLLH) threads the bilayer. Over 722–723 (MI) the chain is Intravirion.

This sequence belongs to the herpesviridae glycoprotein H family. Interacts with glycoprotein L (gL); this interaction is necessary for the correct processing and cell surface expression of gH. The heterodimer gH/gL seems to interact with gB trimers during fusion. In terms of processing, N-glycosylated, O-glycosylated, and sialylated.

It is found in the virion membrane. The protein localises to the host cell membrane. Its subcellular location is the host endosome membrane. In terms of biological role, the heterodimer glycoprotein H-glycoprotein L is required for the fusion of viral and plasma membranes leading to virus entry into the host cell. Following initial binding to host receptor, membrane fusion is mediated by the fusion machinery composed of gB and the heterodimer gH/gL. May also be involved in the fusion between the virion envelope and the outer nuclear membrane during virion morphogenesis. This chain is Envelope glycoprotein H, found in Guinea pig cytomegalovirus (strain 22122) (GPCMV).